We begin with the raw amino-acid sequence, 809 residues long: Glycerol-3-phosphate acyltransferase (809 aa).

The HXXXXD motif signature appears at 306 to 311 (HRSHMD).

Belongs to the GPAT/DAPAT family.

The protein localises to the cell inner membrane. The catalysed reaction is sn-glycerol 3-phosphate + an acyl-CoA = a 1-acyl-sn-glycero-3-phosphate + CoA. Its pathway is phospholipid metabolism; CDP-diacylglycerol biosynthesis; CDP-diacylglycerol from sn-glycerol 3-phosphate: step 1/3. This is Glycerol-3-phosphate acyltransferase from Vibrio vulnificus (strain YJ016).